We begin with the raw amino-acid sequence, 1416 residues long: DNA-directed RNA polymerase subunit beta (1416 aa).

The segment at 1388–1416 (AKAAREQAEGELGGPLGTPRGAAAEKNTA) is disordered.

This sequence belongs to the RNA polymerase beta chain family. In terms of assembly, the RNAP catalytic core consists of 2 alpha, 1 beta, 1 beta' and 1 omega subunit. When a sigma factor is associated with the core the holoenzyme is formed, which can initiate transcription.

It carries out the reaction RNA(n) + a ribonucleoside 5'-triphosphate = RNA(n+1) + diphosphate. DNA-dependent RNA polymerase catalyzes the transcription of DNA into RNA using the four ribonucleoside triphosphates as substrates. This Anaeromyxobacter sp. (strain Fw109-5) protein is DNA-directed RNA polymerase subunit beta.